A 202-amino-acid polypeptide reads, in one-letter code: Small ribosomal subunit protein uS4 (202 aa).

The segment covering 1-13 (MSRYRGPRLRVTR) has biased composition (basic residues). The segment at 1-42 (MSRYRGPRLRVTRRLGELPGLTRKASKKSNPPGQHGQARRKR) is disordered. Residues 90–152 (NRLDNVCFRL…KASKKLVEGN (63 aa)) enclose the S4 RNA-binding domain.

This sequence belongs to the universal ribosomal protein uS4 family. Part of the 30S ribosomal subunit. Contacts protein S5. The interaction surface between S4 and S5 is involved in control of translational fidelity.

Its function is as follows. One of the primary rRNA binding proteins, it binds directly to 16S rRNA where it nucleates assembly of the body of the 30S subunit. In terms of biological role, with S5 and S12 plays an important role in translational accuracy. The polypeptide is Small ribosomal subunit protein uS4 (Prochlorococcus marinus subsp. pastoris (strain CCMP1986 / NIES-2087 / MED4)).